The chain runs to 96 residues: Small ribosomal subunit protein bS6 (96 aa).

This sequence belongs to the bacterial ribosomal protein bS6 family.

In terms of biological role, binds together with bS18 to 16S ribosomal RNA. This is Small ribosomal subunit protein bS6 from Mycobacteroides abscessus (strain ATCC 19977 / DSM 44196 / CCUG 20993 / CIP 104536 / JCM 13569 / NCTC 13031 / TMC 1543 / L948) (Mycobacterium abscessus).